Here is a 183-residue protein sequence, read N- to C-terminus: UPF0398 protein PEPE_0933 (183 aa).

Belongs to the UPF0398 family.

In Pediococcus pentosaceus (strain ATCC 25745 / CCUG 21536 / LMG 10740 / 183-1w), this protein is UPF0398 protein PEPE_0933.